Consider the following 446-residue polypeptide: 5-methylthioadenosine/S-adenosylhomocysteine deaminase (446 aa).

2 residues coordinate Zn(2+): H72 and H74. Residues E101 and H194 each coordinate substrate. H221 provides a ligand contact to Zn(2+). 2 residues coordinate substrate: E224 and D309. D309 is a Zn(2+) binding site.

Belongs to the metallo-dependent hydrolases superfamily. MTA/SAH deaminase family. Zn(2+) is required as a cofactor.

It catalyses the reaction S-adenosyl-L-homocysteine + H2O + H(+) = S-inosyl-L-homocysteine + NH4(+). The catalysed reaction is S-methyl-5'-thioadenosine + H2O + H(+) = S-methyl-5'-thioinosine + NH4(+). Catalyzes the deamination of 5-methylthioadenosine and S-adenosyl-L-homocysteine into 5-methylthioinosine and S-inosyl-L-homocysteine, respectively. Is also able to deaminate adenosine. In Saccharophagus degradans (strain 2-40 / ATCC 43961 / DSM 17024), this protein is 5-methylthioadenosine/S-adenosylhomocysteine deaminase.